A 144-amino-acid polypeptide reads, in one-letter code: MHLNTLSPAPGSHKARKRCGRGIGSGIGKTGGRGHKGQKSRSGGSVRPGFEGGQMPLKQRLPKFGFTSRKSLVRAEVRLHELNLITGDVVDIHALKDAGLITRNIVAVKVMLSGEITRPITLRGIAVTKGAQAAIEAAGGKVEE.

Positions 1–58 (MHLNTLSPAPGSHKARKRCGRGIGSGIGKTGGRGHKGQKSRSGGSVRPGFEGGQMPLK) are disordered. Residues 21 to 31 (RGIGSGIGKTG) show a composition bias toward gly residues.

It belongs to the universal ribosomal protein uL15 family. Part of the 50S ribosomal subunit.

Functionally, binds to the 23S rRNA. The polypeptide is Large ribosomal subunit protein uL15 (Colwellia psychrerythraea (strain 34H / ATCC BAA-681) (Vibrio psychroerythus)).